Here is a 205-residue protein sequence, read N- to C-terminus: Small ribosomal subunit protein uS4 (205 aa).

Residues 95–163 (RRLDNVVYRL…FKENLESRDP (69 aa)) enclose the S4 RNA-binding domain.

The protein belongs to the universal ribosomal protein uS4 family. As to quaternary structure, part of the 30S ribosomal subunit. Contacts protein S5. The interaction surface between S4 and S5 is involved in control of translational fidelity.

Its function is as follows. One of the primary rRNA binding proteins, it binds directly to 16S rRNA where it nucleates assembly of the body of the 30S subunit. Functionally, with S5 and S12 plays an important role in translational accuracy. This chain is Small ribosomal subunit protein uS4, found in Persephonella marina (strain DSM 14350 / EX-H1).